The following is a 626-amino-acid chain: Miltiradiene synthase KSL1, chloroplastic (626 aa).

The N-terminal 51 residues, 1 to 51 (MSLAFNLRVIPFSGHTIQSRRGLFPVHESPMITTKPFAAVKCSLTTSTDLM), are a transit peptide targeting the chloroplast. Mg(2+) is bound by residues Asp329, Asp333, Asn473, and Glu481. The short motif at 329-333 (DDFFD) is the DDXXD motif element.

It belongs to the terpene synthase family. Requires Mg(2+) as cofactor. Highly expressed in roots, and, at low levels, in stems and leaves.

The protein localises to the plastid. It localises to the chloroplast. The catalysed reaction is (+)-copalyl diphosphate = miltiradiene + diphosphate. Its pathway is secondary metabolite biosynthesis; terpenoid biosynthesis. Involved in the biosynthesis of ent-kaurene diterpenoids natural products such as oridonin, miltiradiene, eriocalyxin B and nezukol, known to exhibit antitumor, anti-inflammatory and antibacterial activities. Catalyzes the conversion of (+)-copalyl diphosphate ((+)-CPP) to miltiradiene. The chain is Miltiradiene synthase KSL1, chloroplastic from Isodon rubescens (Rabdosia rubescens).